Here is a 141-residue protein sequence, read N- to C-terminus: Nucleoside diphosphate kinase (141 aa).

Residues lysine 11, phenylalanine 59, arginine 87, threonine 93, arginine 104, and asparagine 114 each contribute to the ATP site. Residue histidine 117 is the Pros-phosphohistidine intermediate of the active site.

This sequence belongs to the NDK family. In terms of assembly, homotetramer. Mg(2+) is required as a cofactor.

It is found in the cytoplasm. The enzyme catalyses a 2'-deoxyribonucleoside 5'-diphosphate + ATP = a 2'-deoxyribonucleoside 5'-triphosphate + ADP. It catalyses the reaction a ribonucleoside 5'-diphosphate + ATP = a ribonucleoside 5'-triphosphate + ADP. Its function is as follows. Major role in the synthesis of nucleoside triphosphates other than ATP. The ATP gamma phosphate is transferred to the NDP beta phosphate via a ping-pong mechanism, using a phosphorylated active-site intermediate. The sequence is that of Nucleoside diphosphate kinase from Janthinobacterium sp. (strain Marseille) (Minibacterium massiliensis).